The sequence spans 608 residues: Altered inheritance of mitochondria protein 9, mitochondrial (608 aa).

Residues 1-21 constitute a mitochondrion transit peptide; sequence MLRRIVNTGTKRLFRVPPRSS.

It belongs to the AIM9 family.

Its subcellular location is the mitochondrion. The polypeptide is Altered inheritance of mitochondria protein 9, mitochondrial (AIM9) (Clavispora lusitaniae (strain ATCC 42720) (Yeast)).